The primary structure comprises 486 residues: Protein nucleotidyltransferase YdiU (486 aa).

ATP is bound by residues glycine 90, glycine 92, arginine 93, lysine 113, aspartate 125, glycine 126, arginine 176, and arginine 183. Residue aspartate 252 is the Proton acceptor of the active site. 2 residues coordinate Mg(2+): asparagine 253 and aspartate 262. Position 262 (aspartate 262) interacts with ATP.

This sequence belongs to the SELO family. Mg(2+) serves as cofactor. Mn(2+) is required as a cofactor.

It carries out the reaction L-seryl-[protein] + ATP = 3-O-(5'-adenylyl)-L-seryl-[protein] + diphosphate. The enzyme catalyses L-threonyl-[protein] + ATP = 3-O-(5'-adenylyl)-L-threonyl-[protein] + diphosphate. The catalysed reaction is L-tyrosyl-[protein] + ATP = O-(5'-adenylyl)-L-tyrosyl-[protein] + diphosphate. It catalyses the reaction L-histidyl-[protein] + UTP = N(tele)-(5'-uridylyl)-L-histidyl-[protein] + diphosphate. It carries out the reaction L-seryl-[protein] + UTP = O-(5'-uridylyl)-L-seryl-[protein] + diphosphate. The enzyme catalyses L-tyrosyl-[protein] + UTP = O-(5'-uridylyl)-L-tyrosyl-[protein] + diphosphate. Functionally, nucleotidyltransferase involved in the post-translational modification of proteins. It can catalyze the addition of adenosine monophosphate (AMP) or uridine monophosphate (UMP) to a protein, resulting in modifications known as AMPylation and UMPylation. This is Protein nucleotidyltransferase YdiU from Pseudomonas entomophila (strain L48).